We begin with the raw amino-acid sequence, 150 residues long: Nucleoside diphosphate kinase (150 aa).

Residues Lys-9, Phe-57, Arg-85, Thr-91, Arg-102, and Asn-112 each coordinate ATP. His-115 serves as the catalytic Pros-phosphohistidine intermediate.

Belongs to the NDK family. Mg(2+) is required as a cofactor.

It localises to the cytoplasm. It catalyses the reaction a 2'-deoxyribonucleoside 5'-diphosphate + ATP = a 2'-deoxyribonucleoside 5'-triphosphate + ADP. The catalysed reaction is a ribonucleoside 5'-diphosphate + ATP = a ribonucleoside 5'-triphosphate + ADP. Major role in the synthesis of nucleoside triphosphates other than ATP. The ATP gamma phosphate is transferred to the NDP beta phosphate via a ping-pong mechanism, using a phosphorylated active-site intermediate. This is Nucleoside diphosphate kinase from Methanoregula boonei (strain DSM 21154 / JCM 14090 / 6A8).